Consider the following 287-residue polypeptide: Heavy metal-associated isoprenylated plant protein 4 (287 aa).

HMA domains lie at 14 to 80 (IITA…VELI) and 112 to 176 (IRTT…KHAE). A metal cation is bound by residues C25, C28, C123, and C126. The stretch at 179-235 (SSKTEEEKKKEEEDKKKKEEEDKKKKEDEKKKEEEKKKEEENKKKEGEKKKEEVKVE) forms a coiled coil. Residues 181–232 (KTEEEKKKEEEDKKKKEEEDKKKKEDEKKKEEEKKKEEENKKKEGEKKKEEV) are disordered. C284 carries the cysteine methyl ester modification. A lipid anchor (S-farnesyl cysteine) is attached at C284. Positions 285 to 287 (RIV) are cleaved as a propeptide — removed in mature form.

Belongs to the HIPP family.

Heavy-metal-binding protein. The sequence is that of Heavy metal-associated isoprenylated plant protein 4 from Arabidopsis thaliana (Mouse-ear cress).